Consider the following 162-residue polypeptide: Interleukin-15 (162 aa).

The signal sequence occupies residues 1–29 (MRISKPSLRSTSIQCYLCFLLNSHLITEA). The propeptide occupies 30–48 (GIHVFVWGCISAGLPKTEA). Intrachain disulfides connect Cys83-Cys133 and Cys90-Cys136. N-linked (GlcNAc...) asparagine glycans are attached at residues Asn119 and Asn127.

It belongs to the IL-15/IL-21 family.

The protein resides in the secreted. In terms of biological role, cytokine that plays a major role in the development of inflammatory and protective immune responses to microbial invaders and parasites by modulating immune cells of both the innate and adaptive immune systems. Stimulates the proliferation of natural killer cells, T-cells and B-cells and promotes the secretion of several cytokines. In monocytes, induces the production of IL8 and monocyte chemotactic protein 1/CCL2, two chemokines that attract neutrophils and monocytes respectively to sites of infection. Unlike most cytokines, which are secreted in soluble form, IL15 is expressed in association with its high affinity IL15RA on the surface of IL15-producing cells and delivers signals to target cells that express IL2RB and IL2RG receptor subunits. Binding to its receptor triggers the phosphorylation of JAK1 and JAK3 and the recruitment and subsequent phosphorylation of signal transducer and activator of transcription-3/STAT3 and STAT5. In mast cells, induces the rapid tyrosine phosphorylation of STAT6 and thereby controls mast cell survival and release of cytokines such as IL4. The polypeptide is Interleukin-15 (IL15) (Cavia porcellus (Guinea pig)).